The chain runs to 397 residues: Serpin B10 (397 aa).

A Nuclear localization signal motif is present at residues 74–77; that stretch reads KKRK.

It belongs to the serpin family. Ov-serpin subfamily.

The protein resides in the nucleus. It localises to the cytoplasm. Protease inhibitor that may play a role in the regulation of protease activities during hematopoiesis and apoptosis induced by TNF. May regulate protease activities in the cytoplasm and in the nucleus. This is Serpin B10 (Serpinb10) from Mus musculus (Mouse).